The following is a 20-amino-acid chain: Protease inhibitor (20 aa).

As to quaternary structure, monomer. In terms of processing, glycosylated. Stored in epidermis and secreted into the hemolymph and cuticle. Not detected in the interior of the epidermis, fat body cells or columnar or goblet cells of the midgut epithelium (at protein level).

Its function is as follows. Inhibits trypsin and chymotrypsin. This chain is Protease inhibitor, found in Antheraea mylitta (Tasar silkworm).